The following is a 335-amino-acid chain: Endo-1,4-beta-xylanase S20 (335 aa).

An N-terminal signal peptide occupies residues 1 to 22; the sequence is MLRKLVTGALAAALLLSGQSNA. The GH11 domain maps to 39–241; the sequence is NNKNETGNGN…GSGYVDFTYA (203 aa). N-linked (GlcNAc...) asparagine glycans are attached at residues Asn-42 and Asn-78. Residue Glu-134 is the Nucleophile of the active site. The N-linked (GlcNAc...) asparagine glycan is linked to Asn-202. Glu-228 functions as the Proton donor in the catalytic mechanism. Asn-251 carries N-linked (GlcNAc...) asparagine glycosylation. The tract at residues 251-291 is disordered; that stretch reads NASAPSNNNNNNNNNNDNNGNWNNWNNNNNNNNNNNNNNNN. A compositionally biased stretch (low complexity) spans 257 to 291; it reads NNNNNNNNNNDNNGNWNNWNNNNNNNNNNNNNNNN. One can recognise a CBM1 domain in the interval 300 to 335; that stretch reads NCAAIWGQCGGSGYNGPKCCKQGSCKQINQWYSQCQ.

The protein belongs to the glycosyl hydrolase 11 (cellulase G) family.

The protein resides in the secreted. It catalyses the reaction Endohydrolysis of (1-&gt;4)-beta-D-xylosidic linkages in xylans.. It participates in glycan degradation; xylan degradation. In terms of biological role, endo-1,4-beta-xylanase involved in the hydrolysis of xylan, a major structural heterogeneous polysaccharide found in plant biomass representing the second most abundant polysaccharide in the biosphere, after cellulose. This is Endo-1,4-beta-xylanase S20 (xynS20) from Neocallimastix patriciarum (Rumen fungus).